The sequence spans 163 residues: UPF0763 protein CJJ81176_1011 (163 aa).

It belongs to the UPF0763 family.

In Campylobacter jejuni subsp. jejuni serotype O:23/36 (strain 81-176), this protein is UPF0763 protein CJJ81176_1011.